The sequence spans 883 residues: Translation initiation factor IF-2 (883 aa).

Positions 32-45 are enriched in polar residues; that stretch reads NDLNGKNNSNSSIN. 2 disordered regions span residues 32–216 and 251–275; these read NDLN…QNKY and RKLG…AETE. Positions 46-62 are enriched in basic and acidic residues; sequence LDKHNNKVEYSQNRDNR. Over residues 75-216 the composition is skewed to polar residues; the sequence is GGYSQNRDNR…VGKNTSQNKY (142 aa). Over residues 251–260 the composition is skewed to basic and acidic residues; that stretch reads RKLGEKKKQQ. The region spanning 381-554 is the tr-type G domain; sequence EKPPVITIMG…DMMLLKANPS (174 aa). Positions 390–397 are G1; that stretch reads GHVDHGKT. 390-397 provides a ligand contact to GTP; sequence GHVDHGKT. A G2 region spans residues 415–419; sequence GITQH. The G3 stretch occupies residues 436–439; the sequence is DTPG. Residues 436–440 and 490–493 contribute to the GTP site; these read DTPGH and NKID. A G4 region spans residues 490-493; the sequence is NKID. A G5 region spans residues 526-528; sequence SAL.

This sequence belongs to the TRAFAC class translation factor GTPase superfamily. Classic translation factor GTPase family. IF-2 subfamily.

It is found in the cytoplasm. One of the essential components for the initiation of protein synthesis. Protects formylmethionyl-tRNA from spontaneous hydrolysis and promotes its binding to the 30S ribosomal subunits. Also involved in the hydrolysis of GTP during the formation of the 70S ribosomal complex. This chain is Translation initiation factor IF-2, found in Borrelia garinii subsp. bavariensis (strain ATCC BAA-2496 / DSM 23469 / PBi) (Borreliella bavariensis).